The sequence spans 343 residues: Probable 4-hydroxy-tetrahydrodipicolinate reductase 1, chloroplastic (343 aa).

The N-terminal 14 residues, 1-14 (MLASTFATHPAAAA), are a transit peptide targeting the chloroplast. NAD(+)-binding positions include 167–169 (GTT) and 190–193 (SPQM). His226 functions as the Proton donor/acceptor in the catalytic mechanism. Lys230 functions as the Proton donor in the catalytic mechanism. 235 to 236 (GT) is a binding site for (S)-2,3,4,5-tetrahydrodipicolinate.

This sequence belongs to the DapB family.

Its subcellular location is the plastid. The protein localises to the chloroplast. It carries out the reaction (S)-2,3,4,5-tetrahydrodipicolinate + NAD(+) + H2O = (2S,4S)-4-hydroxy-2,3,4,5-tetrahydrodipicolinate + NADH + H(+). The catalysed reaction is (S)-2,3,4,5-tetrahydrodipicolinate + NADP(+) + H2O = (2S,4S)-4-hydroxy-2,3,4,5-tetrahydrodipicolinate + NADPH + H(+). Its pathway is amino-acid biosynthesis; L-lysine biosynthesis via DAP pathway; (S)-tetrahydrodipicolinate from L-aspartate: step 4/4. Catalyzes the conversion of 4-hydroxy-tetrahydrodipicolinate (HTPA) to tetrahydrodipicolinate. This is Probable 4-hydroxy-tetrahydrodipicolinate reductase 1, chloroplastic (DAPB1) from Oryza sativa subsp. japonica (Rice).